A 669-amino-acid polypeptide reads, in one-letter code: JmjC domain-containing histone demethylation protein 1 (669 aa).

Positions 1-61 are disordered; that stretch reads MTAVAASSRV…RRKKPRTELV (61 aa). Composition is skewed to polar residues over residues 16 to 27 and 36 to 49; these read ASSSAHPRTLRS and HDSSISPSAAQSKQ. The PHD-type zinc-finger motif lies at 65–126; sequence ELDCAACPAV…KWYCQPCITR (62 aa). Disordered regions lie at residues 131–150 and 220–256; these read FESGTSSSHPPFANVVRPPR and PPDRSSQAPHVQAKAEDVAASPVPRPKPARAKKQATH. The span at 246 to 255 shows a compositional bias: basic residues; it reads KPARAKKQAT. Residues 332 to 494 enclose the JmjC domain; the sequence is VTGTPMQAYV…TQWKLVEIEE (163 aa). Fe cation is bound by residues histidine 390 and aspartate 392. Position 407 (lysine 407) interacts with substrate. Fe cation is bound at residue histidine 462.

Belongs to the JHDM1 histone demethylase family. Fe(2+) serves as cofactor.

The protein localises to the nucleus. The catalysed reaction is N(6),N(6)-dimethyl-L-lysyl(36)-[histone H3] + 2 2-oxoglutarate + 2 O2 = L-lysyl(36)-[histone H3] + 2 formaldehyde + 2 succinate + 2 CO2. Functionally, histone demethylase that specifically demethylates 'Lys-36' of histone H3, thereby playing a central role in histone code. The protein is JmjC domain-containing histone demethylation protein 1 (JHD1) of Mycosarcoma maydis (Corn smut fungus).